The following is a 759-amino-acid chain: Protein MTSS 1 (759 aa).

The IMD domain occupies 1-254 (MEAVIEKECS…EQVILDLKGS (254 aa)). Positions 108-157 (LQEQMEEWKKVANQLDKDHAKEYKKARQEIKNKSSDTLKLQKKAKKVDAQ) form a coiled coil. The interval 259–309 (SYQTPPSSPSTTMSRKSSVCSSLNSVNSSDSRSSGSHSHSPSSHYRYRSSN) is disordered. Residue T262 is modified to Phosphothreonine. Phosphoserine occurs at positions 265, 266, 275, and 326. Residues 331 to 354 (QDAFQSKSPSPMPPEAANQLSNGF) form a disordered region. At T429 the chain carries Phosphothreonine. Disordered stretches follow at residues 431 to 472 (QRRK…AATR) and 569 to 759 (KRPA…PRFS). T607 is modified (phosphothreonine). Positions 612–627 (PIPIKTPVIPVKTPTV) are enriched in low complexity. A phosphoserine mark is found at S648 and S651. The span at 660–670 (GVSNIPSSLWS) shows a compositional bias: polar residues. The segment covering 675 to 685 (VNPPLPGPKPS) has biased composition (pro residues). Residues 731-748 (QGEDMLNAIRRGVKLKKT) form the WH2 domain.

It belongs to the MTSS family. In terms of assembly, binds to actin. As to expression, strongly expressed in the developing neurons and skeletal and cardiac muscles in embryos. Strongly expressed also in liver, outer layers of the kidney, and in the Purkinje cells of the brain.

It is found in the cytoplasm. It localises to the cytoskeleton. In terms of biological role, inhibits the nucleation of actin filaments in vitro. This Mus musculus (Mouse) protein is Protein MTSS 1.